A 150-amino-acid chain; its full sequence is Deoxyuridine 5'-triphosphate nucleotidohydrolase (150 aa).

Substrate contacts are provided by residues 69 to 71, N82, and 86 to 88; these read RSG and LID.

It belongs to the dUTPase family. Mg(2+) serves as cofactor.

The catalysed reaction is dUTP + H2O = dUMP + diphosphate + H(+). The protein operates within pyrimidine metabolism; dUMP biosynthesis; dUMP from dCTP (dUTP route): step 2/2. Functionally, this enzyme is involved in nucleotide metabolism: it produces dUMP, the immediate precursor of thymidine nucleotides and it decreases the intracellular concentration of dUTP so that uracil cannot be incorporated into DNA. This is Deoxyuridine 5'-triphosphate nucleotidohydrolase from Methylobacillus flagellatus (strain ATCC 51484 / DSM 6875 / VKM B-1610 / KT).